The chain runs to 409 residues: Serine/threonine transporter SstT (409 aa).

A run of 9 helical transmembrane segments spans residues 24-44 (LALG…AGLF), 48-68 (FVGA…AATI), 82-102 (IIVL…IAGM), 142-162 (AIAN…GAAL), 194-214 (LGIF…ALAG), 218-238 (LLAV…PAIV), 292-312 (IPLG…VLAM), 319-339 (GIQV…VSAC), and 365-385 (VAMQ…SAET).

It belongs to the dicarboxylate/amino acid:cation symporter (DAACS) (TC 2.A.23) family.

The protein resides in the cell inner membrane. It carries out the reaction L-serine(in) + Na(+)(in) = L-serine(out) + Na(+)(out). It catalyses the reaction L-threonine(in) + Na(+)(in) = L-threonine(out) + Na(+)(out). Its function is as follows. Involved in the import of serine and threonine into the cell, with the concomitant import of sodium (symport system). The polypeptide is Serine/threonine transporter SstT (Neisseria meningitidis serogroup C (strain 053442)).